The primary structure comprises 201 residues: Small ribosomal subunit protein uS4 (201 aa).

The segment at 26 to 47 (LSKKNYPPGQHGNNRRRKTSEY) is disordered. Positions 92–154 (ARLDNVVFRL…SKSLEVIADA (63 aa)) constitute an S4 RNA-binding domain.

This sequence belongs to the universal ribosomal protein uS4 family. In terms of assembly, part of the 30S ribosomal subunit. Contacts protein S5. The interaction surface between S4 and S5 is involved in control of translational fidelity.

Its function is as follows. One of the primary rRNA binding proteins, it binds directly to 16S rRNA where it nucleates assembly of the body of the 30S subunit. In terms of biological role, with S5 and S12 plays an important role in translational accuracy. The protein is Small ribosomal subunit protein uS4 of Porphyromonas gingivalis (strain ATCC 33277 / DSM 20709 / CIP 103683 / JCM 12257 / NCTC 11834 / 2561).